We begin with the raw amino-acid sequence, 276 residues long: ATP synthase subunit a 2 (276 aa).

5 helical membrane passes run 45–65 (AVHVDSLGWSIALGALFVWLF), 105–125 (VIAPLALTVFCWIFLMNLMDL), 154–173 (VNVTLGMSLSVFFLIIYYSI), 226–246 (LLFILIALMPFWAQWALSVPW), and 247–267 (AIFHILVIVLQAFIFMMLTIV).

This sequence belongs to the ATPase A chain family. In terms of assembly, F-type ATPases have 2 components, CF(1) - the catalytic core - and CF(0) - the membrane proton channel. CF(1) has five subunits: alpha(3), beta(3), gamma(1), delta(1), epsilon(1). CF(0) has three main subunits: a(1), b(2) and c(9-12). The alpha and beta chains form an alternating ring which encloses part of the gamma chain. CF(1) is attached to CF(0) by a central stalk formed by the gamma and epsilon chains, while a peripheral stalk is formed by the delta and b chains.

It localises to the cell inner membrane. In terms of biological role, key component of the proton channel; it plays a direct role in the translocation of protons across the membrane. The sequence is that of ATP synthase subunit a 2 from Hahella chejuensis (strain KCTC 2396).